The following is a 550-amino-acid chain: Membrane protein insertase YidC (550 aa).

The chain crosses the membrane as a helical span at residues 6 to 26; the sequence is LIVFIVLSFGLLFVWQEYFAP. The interval 30-59 is disordered; sequence PKPVAAAVQPDGTPAPATARPADSPATGKL. 4 consecutive transmembrane segments (helical) span residues 360–380, 430–450, 472–492, and 504–524; these read WGWA…PLSA, LPIV…LASV, ILPA…PPPA, and PLAF…YWLV.

Belongs to the OXA1/ALB3/YidC family. Type 1 subfamily. As to quaternary structure, interacts with the Sec translocase complex via SecD. Specifically interacts with transmembrane segments of nascent integral membrane proteins during membrane integration.

The protein resides in the cell inner membrane. Its function is as follows. Required for the insertion and/or proper folding and/or complex formation of integral membrane proteins into the membrane. Involved in integration of membrane proteins that insert both dependently and independently of the Sec translocase complex, as well as at least some lipoproteins. Aids folding of multispanning membrane proteins. The sequence is that of Membrane protein insertase YidC from Laribacter hongkongensis (strain HLHK9).